The following is a 118-amino-acid chain: Ribonuclease P protein component (118 aa).

This sequence belongs to the RnpA family. In terms of assembly, consists of a catalytic RNA component (M1 or rnpB) and a protein subunit.

The enzyme catalyses Endonucleolytic cleavage of RNA, removing 5'-extranucleotides from tRNA precursor.. In terms of biological role, RNaseP catalyzes the removal of the 5'-leader sequence from pre-tRNA to produce the mature 5'-terminus. It can also cleave other RNA substrates such as 4.5S RNA. The protein component plays an auxiliary but essential role in vivo by binding to the 5'-leader sequence and broadening the substrate specificity of the ribozyme. The sequence is that of Ribonuclease P protein component from Shewanella putrefaciens (strain CN-32 / ATCC BAA-453).